We begin with the raw amino-acid sequence, 730 residues long: Catalase-peroxidase (730 aa).

Residues 1 to 25 (MEEKKCPVTGHTQHTPTGGGTKNKD) are disordered. Positions 95 to 218 (WHSAGTYRLN…LAAVQMGLIY (124 aa)) form a cross-link, tryptophyl-tyrosyl-methioninium (Trp-Tyr) (with M-244). His96 serves as the catalytic Proton acceptor. The tryptophyl-tyrosyl-methioninium (Tyr-Met) (with W-95) cross-link spans 218–244 (YVNPEGPNGQPSVLASGRDVRDTFKRM). His259 is a binding site for heme b.

The protein belongs to the peroxidase family. Peroxidase/catalase subfamily. In terms of assembly, homodimer or homotetramer. Heme b is required as a cofactor. Post-translationally, formation of the three residue Trp-Tyr-Met cross-link is important for the catalase, but not the peroxidase activity of the enzyme.

It carries out the reaction H2O2 + AH2 = A + 2 H2O. The catalysed reaction is 2 H2O2 = O2 + 2 H2O. In terms of biological role, bifunctional enzyme with both catalase and broad-spectrum peroxidase activity. The protein is Catalase-peroxidase of Desulfitobacterium hafniense (strain Y51).